The primary structure comprises 368 residues: 4-hydroxy-3-methylbut-2-en-1-yl diphosphate synthase (flavodoxin) (368 aa).

[4Fe-4S] cluster is bound by residues cysteine 271, cysteine 274, cysteine 306, and glutamate 313.

This sequence belongs to the IspG family. [4Fe-4S] cluster is required as a cofactor.

It carries out the reaction (2E)-4-hydroxy-3-methylbut-2-enyl diphosphate + oxidized [flavodoxin] + H2O + 2 H(+) = 2-C-methyl-D-erythritol 2,4-cyclic diphosphate + reduced [flavodoxin]. It functions in the pathway isoprenoid biosynthesis; isopentenyl diphosphate biosynthesis via DXP pathway; isopentenyl diphosphate from 1-deoxy-D-xylulose 5-phosphate: step 5/6. In terms of biological role, converts 2C-methyl-D-erythritol 2,4-cyclodiphosphate (ME-2,4cPP) into 1-hydroxy-2-methyl-2-(E)-butenyl 4-diphosphate. The polypeptide is 4-hydroxy-3-methylbut-2-en-1-yl diphosphate synthase (flavodoxin) (Haemophilus influenzae (strain PittGG)).